The following is a 610-amino-acid chain: GATOR complex protein NPRL3 (610 aa).

The residue at position 437 (Ser-437) is a Phosphoserine. The disordered stretch occupies residues 474-501 (REASEDHSSLASDNIAVQPSSSHKSNFS). Positions 482 to 501 (SLASDNIAVQPSSSHKSNFS) are enriched in polar residues.

The protein belongs to the NPR3 family. Component of the GATOR complex consisting of mio, Nup44A/Seh1, Im11, Nplr3, Nplr2, Wdr24, Wdr59 and Sec13. Within the GATOR complex, probable component of the GATOR1 subcomplex which is likely composed of Iml1, Nplr2 and Nplr3. Interacts with Nprl2.

It localises to the cytoplasm. The protein localises to the lysosome. An essential component of the GATOR subcomplex GATOR1 which functions as an inhibitor of the amino acid-sensing branch of the TORC1 signaling pathway. The two GATOR subcomplexes, GATOR1 and GATOR2, regulate the TORC1 pathway in order to mediate metabolic homeostasis, female gametogenesis and the response to amino acid limitation and complete starvation. The function of GATOR1 in negatively regulating the TORC1 pathway is essential for maintaining baseline levels of TORC1 activity under nutrient rich conditions, and for promoting survival during amino acid or complete starvation by inhibiting TORC1-dependent cell growth and promoting catabolic metabolism and autophagy. In addition, this inhibition of TORC1 is necessary to maintain female fertility under normal conditions and during periods of nutrient stress. GATOR1 and GATOR2 act at different stages of oogenesis to regulate TORC1 in order to control meiotic entry and promote oocyte growth and development. After exactly four mitotic cyst divisions, the GATOR1 complex members (Iml1, Nprl2 and Nprl3) down-regulate TORC1 to slow cellular metabolism and promote the mitotic/meiotic transition. At later stages of oogenesis, the mio and Nup44A components of the GATOR2 complex inhibit GATOR1 and thus activate TORC1 to promote meiotic progression, and drive oocyte growth and development. In Drosophila melanogaster (Fruit fly), this protein is GATOR complex protein NPRL3.